Reading from the N-terminus, the 2300-residue chain is Protein hobbit (2300 aa).

Residues 1–21 form the signal peptide; the sequence is MMLQLLLFCLALFIFVYWVLP. Residues 23–117 are transmembrane domain; the sequence is GISWYLVKRF…LRRTQTLAGK (95 aa). Disordered regions lie at residues 269-290 and 2111-2148; these read TSTGQPSRRSTQGLAPSKRSYD and VSDELDDNASTSSASTTNLQAKSSTSSSTKRSGKGKKG. Positions 270–282 are enriched in polar residues; that stretch reads STGQPSRRSTQGL. The tract at residues 1750 to 2300 is required for endoplasmic reticulum-cell membrane contact sites location and binding to phosphatidylinositols; sequence VVSETVGAFL…ASSGKRSGND (551 aa). A compositionally biased stretch (low complexity) spans 2119–2140; it reads ASTSSASTTNLQAKSSTSSSTK.

The protein localises to the cell membrane. It is found in the endoplasmic reticulum membrane. Its subcellular location is the mitochondrion membrane. Tube-forming lipid transport protein which binds to phosphatidylinositols and affects phosphatidylinositol-4,5-bisphosphate (PtdIns-4,5-P2) distribution. In Drosophila melanogaster (Fruit fly), this protein is Protein hobbit.